We begin with the raw amino-acid sequence, 401 residues long: Phosphoglycerate kinase (401 aa).

Residues 24 to 26 (DFN), R40, 63 to 66 (HFGR), R122, and R155 each bind substrate. ATP-binding positions include K206, G297, E328, and 357-360 (GGDS).

The protein belongs to the phosphoglycerate kinase family. In terms of assembly, monomer.

Its subcellular location is the cytoplasm. The catalysed reaction is (2R)-3-phosphoglycerate + ATP = (2R)-3-phospho-glyceroyl phosphate + ADP. It functions in the pathway carbohydrate degradation; glycolysis; pyruvate from D-glyceraldehyde 3-phosphate: step 2/5. The protein is Phosphoglycerate kinase of Acaryochloris marina (strain MBIC 11017).